The following is a 161-amino-acid chain: Nucleotide-binding protein Shew_2893 (161 aa).

Belongs to the YajQ family.

Functionally, nucleotide-binding protein. This chain is Nucleotide-binding protein Shew_2893, found in Shewanella loihica (strain ATCC BAA-1088 / PV-4).